Consider the following 366-residue polypeptide: Ferredoxin--NADP reductase, leaf isozyme 2, chloroplastic (366 aa).

A chloroplast-targeting transit peptide spans 1–48 (MAAVNTVSSLPCSKAGAAVAGGAPRPSTCSVFYPPRCWSKRSSGNGVR). The FAD-binding FR-type domain occupies 87–209 (KEPYTGRCLL…TGPVGKEMLM (123 aa)). FAD contacts are provided by residues 145–148 (RLYS), 166–168 (CVK), Tyr-172, and 183–185 (VCS). NADP(+) contacts are provided by Ser-148 and Lys-168. A disulfide bridge links Cys-184 with Cys-189. Ser-185 carries the phosphoserine modification. Thr-216 is subject to Phosphothreonine. Thr-224 lines the FAD pocket. NADP(+) is bound by residues Thr-224, 256-257 (VP), 286-287 (SR), Lys-296, 325-326 (GL), and Glu-364.

The protein belongs to the ferredoxin--NADP reductase type 1 family. Heterodimer with LFNR1. Component of high molecular weight thylakoid LFNRs-containing protein complexes containing LIR1, LFNR1, LFNR2, TIC62 and TROL proteins. Interacts directly with LFNR1 and LFNR2; LIR1 increases the affinity of LFNR1 and LFNR2 for TIC62 and subsequent thylakoid relocalization. It depends on FAD as a cofactor. In terms of processing, may form interchain disulfide bonds with LIR1.

It is found in the plastid. The protein resides in the chloroplast stroma. The protein localises to the chloroplast thylakoid membrane. The enzyme catalyses 2 reduced [2Fe-2S]-[ferredoxin] + NADP(+) + H(+) = 2 oxidized [2Fe-2S]-[ferredoxin] + NADPH. Its pathway is energy metabolism; photosynthesis. Functionally, plays a key role in regulating the relative amounts of cyclic and non-cyclic electron flow to meet the demands of the plant for ATP and reducing power. This chain is Ferredoxin--NADP reductase, leaf isozyme 2, chloroplastic, found in Oryza sativa subsp. indica (Rice).